The following is a 352-amino-acid chain: UDP-N-acetylglucosamine--N-acetylmuramyl-(pentapeptide) pyrophosphoryl-undecaprenol N-acetylglucosamine transferase (352 aa).

Residues 11–13, N120, R161, S188, and Q286 each bind UDP-N-acetyl-alpha-D-glucosamine; that span reads TGG.

The protein belongs to the glycosyltransferase 28 family. MurG subfamily.

The protein localises to the cell inner membrane. It catalyses the reaction di-trans,octa-cis-undecaprenyl diphospho-N-acetyl-alpha-D-muramoyl-L-alanyl-D-glutamyl-meso-2,6-diaminopimeloyl-D-alanyl-D-alanine + UDP-N-acetyl-alpha-D-glucosamine = di-trans,octa-cis-undecaprenyl diphospho-[N-acetyl-alpha-D-glucosaminyl-(1-&gt;4)]-N-acetyl-alpha-D-muramoyl-L-alanyl-D-glutamyl-meso-2,6-diaminopimeloyl-D-alanyl-D-alanine + UDP + H(+). Its pathway is cell wall biogenesis; peptidoglycan biosynthesis. In terms of biological role, cell wall formation. Catalyzes the transfer of a GlcNAc subunit on undecaprenyl-pyrophosphoryl-MurNAc-pentapeptide (lipid intermediate I) to form undecaprenyl-pyrophosphoryl-MurNAc-(pentapeptide)GlcNAc (lipid intermediate II). The sequence is that of UDP-N-acetylglucosamine--N-acetylmuramyl-(pentapeptide) pyrophosphoryl-undecaprenol N-acetylglucosamine transferase from Prochlorococcus marinus (strain NATL1A).